The primary structure comprises 114 residues: Large ribosomal subunit protein bL17 (114 aa).

It belongs to the bacterial ribosomal protein bL17 family. As to quaternary structure, part of the 50S ribosomal subunit. Contacts protein L32.

This chain is Large ribosomal subunit protein bL17, found in Halothermothrix orenii (strain H 168 / OCM 544 / DSM 9562).